A 327-amino-acid chain; its full sequence is Cell surface glycoprotein CD200 receptor 1 (327 aa).

The N-terminal stretch at 1-23 is a signal peptide; it reads MLCFWRTSHVAVLLIWGVFAAES. Topologically, residues 24-239 are extracellular; it reads SCPDKNQTMQ…GRGGDQLLGS (216 aa). Residues 26–145 form the Ig-like V-type domain; sequence PDKNQTMQNN…GNFQNIYDLQ (120 aa). N-linked (GlcNAc...) asparagine glycans are attached at residues Asn-29, Asn-34, Asn-43, Asn-96, Asn-159, Asn-187, Asn-192, and Asn-222. Intrachain disulfides connect Cys-58/Cys-129 and Cys-81/Cys-97. Residues 147–226 enclose the Ig-like C2-type domain; the sequence is LVPPEVTHFP…HLTTGNQSLS (80 aa). Disulfide bonds link Cys-164-Cys-213 and Cys-183-Cys-201. A helical transmembrane segment spans residues 240-260; it reads YIQYIIPSIIILIIIGCICLL. The Cytoplasmic portion of the chain corresponds to 261–327; sequence KISGCRKCKL…DCLTLSAMGI (67 aa).

It belongs to the CD200R family. As to quaternary structure, CD200 and CD200R1 interact via their respective N-terminal Ig-like domains. In terms of processing, phosphorylated on tyrosine residues. Highly N-glycosylated. As to expression, restricted to cells of the myeloid lineage.

The protein localises to the cell membrane. Functionally, inhibitory receptor for the CD200/OX2 cell surface glycoprotein. Limits inflammation by inhibiting the expression of pro-inflammatory molecules including TNF-alpha, interferons, and inducible nitric oxide synthase (iNOS) in response to selected stimuli. The chain is Cell surface glycoprotein CD200 receptor 1 (Cd200r1) from Rattus norvegicus (Rat).